Consider the following 317-residue polypeptide: Melanocyte-stimulating hormone receptor (317 aa).

Over 1–37 the chain is Extracellular; the sequence is MPVQGSQRRLLGSLNSTPTATPHLGLAANQTGARCLE. Asn29 is a glycosylation site (N-linked (GlcNAc...) asparagine). A helical membrane pass occupies residues 38–63; sequence VSIPDGLFLSLGLVSLVENVLVVTAI. The Cytoplasmic portion of the chain corresponds to 64–72; sequence AKNRNLHSP. The helical transmembrane segment at 73–93 threads the bilayer; that stretch reads MYCFICCLALSDLLVSGSNML. Residues 94–118 are Extracellular-facing; it reads ETAVILLLEAGALAARAAVVQQLDN. Residues 119 to 140 traverse the membrane as a helical segment; the sequence is VIDVITCSSMLSSLCFLGAIAV. Residues 141–163 are Cytoplasmic-facing; the sequence is DRYISIFYALRYHSIVTLPRARR. The chain crosses the membrane as a helical span at residues 164-183; that stretch reads AVAAIWVASVLFSMLFIAYY. The Extracellular segment spans residues 184–191; the sequence is DHAAVLLC. Residues 192–211 traverse the membrane as a helical segment; sequence LVVFFLAMLVLMAVLYVHML. Topologically, residues 212–240 are cytoplasmic; the sequence is ARACQHAQGIARLHKRQCPAHQGFGLKGA. Residues 241–266 traverse the membrane as a helical segment; it reads ATLTILLGIFFLCWGPFFLHLTLIVL. The Extracellular portion of the chain corresponds to 267–279; sequence CPQHPTCSCIFKN. Residues 280–300 traverse the membrane as a helical segment; that stretch reads FNLFLALIICNAIIDPLIYAF. The Cytoplasmic segment spans residues 301–317; the sequence is RSQELRRTLKEVLLCSW. Cys315 carries S-palmitoyl cysteine lipidation.

This sequence belongs to the G-protein coupled receptor 1 family. In terms of assembly, interacts with MGRN1, but does not undergo MGRN1-mediated ubiquitination; this interaction competes with GNAS-binding and thus inhibits agonist-induced cAMP production. Interacts with OPN3; the interaction results in a decrease in MC1R-mediated cAMP signaling and ultimately a decrease in melanin production in melanocytes.

Its subcellular location is the cell membrane. Functionally, receptor for MSH (alpha, beta and gamma) and ACTH. The activity of this receptor is mediated by G proteins which activate adenylate cyclase. Mediates melanogenesis, the production of eumelanin (black/brown) and phaeomelanin (red/yellow), via regulation of cAMP signaling in melanocytes. In Chlorocebus aethiops (Green monkey), this protein is Melanocyte-stimulating hormone receptor (MC1R).